The chain runs to 101 residues: CRISPR-associated endoribonuclease Cas2 (101 aa).

Aspartate 8 lines the Mg(2+) pocket.

The protein belongs to the CRISPR-associated endoribonuclease Cas2 protein family. In terms of assembly, homodimer, forms a heterotetramer with a Cas1 homodimer. It depends on Mg(2+) as a cofactor.

CRISPR (clustered regularly interspaced short palindromic repeat), is an adaptive immune system that provides protection against mobile genetic elements (viruses, transposable elements and conjugative plasmids). CRISPR clusters contain sequences complementary to antecedent mobile elements and target invading nucleic acids. CRISPR clusters are transcribed and processed into CRISPR RNA (crRNA). Functions as a ssRNA-specific endoribonuclease. Involved in the integration of spacer DNA into the CRISPR cassette. This Parvibaculum lavamentivorans (strain DS-1 / DSM 13023 / NCIMB 13966) protein is CRISPR-associated endoribonuclease Cas2.